The primary structure comprises 328 residues: Serine protease 27 (328 aa).

Residues 1-22 (MRQPHITALLLLPLLLRSGTEG) form the signal peptide. A propeptide spans 23 to 37 (AEAMRACGHPRMFNR) (activation peptide). The 243-residue stretch at 38–280 (MVGGEDALEG…HYQWIHQIIP (243 aa)) folds into the Peptidase S1 domain. An intrachain disulfide couples Cys63 to Cys79. The active-site Charge relay system is the His78. The N-linked (GlcNAc...) asparagine glycan is linked to Asn82. Residue Asp127 is the Charge relay system of the active site. 3 disulfides stabilise this stretch: Cys161/Cys238, Cys194/Cys217, and Cys228/Cys256. Ser232 serves as the catalytic Charge relay system.

It belongs to the peptidase S1 family.

Its subcellular location is the secreted. This is Serine protease 27 (Prss27) from Rattus norvegicus (Rat).